A 1231-amino-acid polypeptide reads, in one-letter code: RNA-binding protein 33 (1231 aa).

Residues 1–13 are compositionally biased toward gly residues; that stretch reads MAAALGAGGGAGA. Disordered stretches follow at residues 1 to 168 and 219 to 261; these read MAAA…EEEQ and SQVA…FKTE. Alanine 2 bears the N-acetylalanine mark. The span at 20–36 shows a compositional bias: basic and acidic residues; it reads QFDKPGAERSWRRRAAD. A compositionally biased stretch (acidic residues) spans 37–49; the sequence is EDWDSELEDDLLG. Serine 41 carries the post-translational modification Phosphoserine. Over residues 82–108 the composition is skewed to polar residues; the sequence is FSSQGVTISLNTTSGIVTSFELSDNTN. Composition is skewed to acidic residues over residues 112-124 and 153-168; these read GEQE…GDDE and LTED…EEEQ. Positions 224-240 are enriched in basic and acidic residues; sequence ETHEGGMETLELQKDIK. A compositionally biased stretch (acidic residues) spans 241-252; sequence EESDEEDDDDEE. A phosphoserine mark is found at serine 243 and serine 271. Disordered regions lie at residues 297-436 and 452-761; these read FEER…KNIH and PLLP…NLRE. Basic residues predominate over residues 305-316; the sequence is KQGRYGSRRGGR. Basic and acidic residues predominate over residues 327–344; that stretch reads GDQRRDNSERGRMKEHRP. Residues 360–379 are compositionally biased toward pro residues; sequence LIPPPQPQPPPPPPPPPPQQ. The span at 380–398 shows a compositional bias: low complexity; sequence QPIRSLFQQQQLQPLLPLQ. Positions 469-483 are enriched in pro residues; sequence FPGPPEFPQHTPGPV. Residue arginine 520 is modified to Asymmetric dimethylarginine. Pro residues-rich tracts occupy residues 531 to 540, 604 to 618, 632 to 647, and 661 to 682; these read SPPPPPPPPT, FIPP…PGQP, LHPP…PQPQ, and PLQP…PPQH. Polar residues-rich tracts occupy residues 713–728 and 736–759; these read QTAQ…QCTP and AASQ…NSNL. 2 positions are modified to phosphoserine: serine 792 and serine 816. Disordered regions lie at residues 796-840, 876-932, and 998-1080; these read RAVV…ETRL, ERLA…FPGA, and ETPH…MRQQ. Residues 820-829 are compositionally biased toward basic and acidic residues; it reads QPKEEAKPEA. Residues 840-891 are a coiled coil; that stretch reads LYRLKIEEQKRLREEILKQKELRRQQQAGARKKELLERLAQQQQQQQQQQHQ. Residues 880–901 are compositionally biased toward low complexity; that stretch reads QQQQQQQQQQHQPQQQQQQPQQ. A phosphoserine mark is found at serine 1002 and serine 1010. A Glycyl lysine isopeptide (Lys-Gly) (interchain with G-Cter in SUMO2) cross-link involves residue lysine 1019. Phosphoserine is present on residues serine 1032 and serine 1051.

Associates with the NXF1-NXT1 RNA export complex. Interacts with ALKBH5; facilitating ALKBH5 recruitment to m6A-containing transcripts. Interacts with SENP1; promoting ALKBH5 deSUMOylation and subsequent activation.

Its subcellular location is the nucleus. It localises to the cytoplasm. Functionally, RNA reader protein, which recognizes and binds specific RNAs, thereby regulating RNA metabolic processes, such as mRNA export, mRNA stability and/or translation. Binds a subset of intronless RNAs containing GC-rich elements, such as NORAD, and promotes their nuclear export by recruiting target RNAs to components of the NXF1-NXT1 RNA export machinery. Specifically recognizes and binds N6-methyladenosine (m6A)-containing mRNAs, promoting their demethylation by ALKBH5. Acts as an molecular adapter, which (1) promotes ALKBH5 recruitment to m6A-containing transcripts and (2) activates ALKBH5 demethylase activity by recruiting SENP1, leading to ALKBH5 deSUMOylation and subsequent activation. This Mus musculus (Mouse) protein is RNA-binding protein 33.